The primary structure comprises 285 residues: uncharacterized protein (285 aa).

Positions 1–25 (MVKKWLIQFAVMLSVLSTFTYSASA) are cleaved as a signal peptide.

This is an uncharacterized protein from Bacillus subtilis (strain 168).